We begin with the raw amino-acid sequence, 251 residues long: Pyridoxine 5'-phosphate synthase (251 aa).

Asn-7 lines the 3-amino-2-oxopropyl phosphate pocket. 1-deoxy-D-xylulose 5-phosphate is bound at residue 9–10 (DH). Arg-18 serves as a coordination point for 3-amino-2-oxopropyl phosphate. His-43 (proton acceptor) is an active-site residue. 1-deoxy-D-xylulose 5-phosphate-binding residues include Arg-45 and His-50. Residue Glu-70 is the Proton acceptor of the active site. Thr-100 lines the 1-deoxy-D-xylulose 5-phosphate pocket. His-198 acts as the Proton donor in catalysis. 3-amino-2-oxopropyl phosphate-binding positions include Ala-199 and 220-221 (GH).

It belongs to the PNP synthase family. In terms of assembly, homooctamer; tetramer of dimers.

It is found in the cytoplasm. The catalysed reaction is 3-amino-2-oxopropyl phosphate + 1-deoxy-D-xylulose 5-phosphate = pyridoxine 5'-phosphate + phosphate + 2 H2O + H(+). It participates in cofactor biosynthesis; pyridoxine 5'-phosphate biosynthesis; pyridoxine 5'-phosphate from D-erythrose 4-phosphate: step 5/5. Catalyzes the complicated ring closure reaction between the two acyclic compounds 1-deoxy-D-xylulose-5-phosphate (DXP) and 3-amino-2-oxopropyl phosphate (1-amino-acetone-3-phosphate or AAP) to form pyridoxine 5'-phosphate (PNP) and inorganic phosphate. The sequence is that of Pyridoxine 5'-phosphate synthase from Aromatoleum aromaticum (strain DSM 19018 / LMG 30748 / EbN1) (Azoarcus sp. (strain EbN1)).